The chain runs to 490 residues: Ribosomal L1 domain-containing protein 1 (490 aa).

The residue at position 1 (M1) is an N-acetylmethionine. Positions 1–27 (MEDSASASLSSAAATGTSTSTPAAPTA) are enriched in low complexity. Residues 1–33 (MEDSASASLSSAAATGTSTSTPAAPTARKQLDK) are disordered. Glycyl lysine isopeptide (Lys-Gly) (interchain with G-Cter in SUMO2) cross-links involve residues K120 and K254. A compositionally biased stretch (basic residues) spans 280 to 293 (LNKKKKEARRKRRE). Residues 280 to 313 (LNKKKKEARRKRRERNFEKQKERKKKRQQARKTA) adopt a coiled-coil conformation. Positions 280 to 490 (LNKKKKEARR…PKKPKVPQST (211 aa)) are disordered. The span at 329 to 343 (TVKKPESKKEQTPEH) shows a compositional bias: basic and acidic residues. T340 carries the post-translational modification Phosphothreonine. The segment covering 344–353 (GKKKRGRGKA) has biased composition (basic residues). T358 is modified (phosphothreonine). S361 carries the phosphoserine modification. Position 375 is a phosphothreonine (T375). The span at 376–385 (PANEKVEIQK) shows a compositional bias: basic and acidic residues. K380 is covalently cross-linked (Glycyl lysine isopeptide (Lys-Gly) (interchain with G-Cter in SUMO2)). A phosphoserine mark is found at S392 and S396. 2 positions are modified to phosphothreonine: T415 and T423. S427 bears the Phosphoserine mark. Residues 427–460 (SPEKKPKIKEEAVKEKSPSLGKKDARQTPKKPEA) show a composition bias toward basic and acidic residues. Residue K435 forms a Glycyl lysine isopeptide (Lys-Gly) (interchain with G-Cter in SUMO2) linkage. Residue S443 is modified to Phosphoserine. A Glycyl lysine isopeptide (Lys-Gly) (interchain with G-Cter in SUMO2) cross-link involves residue K461. Phosphothreonine is present on T465. At K468 the chain carries N6-acetyllysine. S469 carries the post-translational modification Phosphoserine. Over residues 469–490 (SVRKASHTPKKWPKKPKVPQST) the composition is skewed to basic residues.

The protein belongs to the universal ribosomal protein uL1 family. Highly divergent. In terms of assembly, interacts with ING1 (isoform 2). Interacts with KPNA7 and KPNA2. Expressed at high intensities in the heart, skeletal muscle, and placenta.

Its subcellular location is the nucleus. It localises to the nucleolus. In terms of biological role, regulates cellular senescence through inhibition of PTEN translation. Acts as a pro-apoptotic regulator in response to DNA damage. This Homo sapiens (Human) protein is Ribosomal L1 domain-containing protein 1 (RSL1D1).